A 455-amino-acid polypeptide reads, in one-letter code: MNIVILAAGLGKRMRSALPKVLHPLAGKPLLAHVIETARSLSPTRLVVVVGHGGDRVRDMVGAPDVTFATQDQQLGTGHAVMQALDQLDDTVPTLVLYGDVPLTRAETLNALVGAAGQDHLGVLTVHLDDPTGYGRIVRDATGRITRIVEQKDANETQLAIHEVNTGILVCPTARLKTWLATLRNDNAQGEYYLTDVIERAASEGLPITSAHPLAEWETLGVNSKVQLAELERIHQRNLAQQLLEDGVTLIDPARIDIRGRLTCGRDVVIDIDCIFEGNVTLGDGVRIGAHAVIRDAAIQAGAEILPFCHIEQATVGAQSRIGPYARLRPGTELAEDVHIGNFVEVKNSQIAAHSKANHLAYVGDATVGSRVNIGAGTITCNYDGANKFRTIIEDDAFIGSDTQLVAPVRVGRGATLGAGTTLTKDAPEGQLTVSRARQTTVNGWQRPVKQKKDA.

The segment at M1 to K225 is pyrophosphorylase. UDP-N-acetyl-alpha-D-glucosamine is bound by residues L6–G9, K20, Q71, G76–T77, Y98–D100, G135, E150, N165, and N223. D100 lines the Mg(2+) pocket. Position 223 (N223) interacts with Mg(2+). Positions V226 to D246 are linker. Positions G247 to A455 are N-acetyltransferase. UDP-N-acetyl-alpha-D-glucosamine contacts are provided by R329 and K347. H359 serves as the catalytic Proton acceptor. UDP-N-acetyl-alpha-D-glucosamine is bound by residues Y362 and N373. Acetyl-CoA-binding positions include A376, N382–Y383, S401, A419, and R436.

This sequence in the N-terminal section; belongs to the N-acetylglucosamine-1-phosphate uridyltransferase family. In the C-terminal section; belongs to the transferase hexapeptide repeat family. Homotrimer. Requires Mg(2+) as cofactor.

It localises to the cytoplasm. It catalyses the reaction alpha-D-glucosamine 1-phosphate + acetyl-CoA = N-acetyl-alpha-D-glucosamine 1-phosphate + CoA + H(+). The catalysed reaction is N-acetyl-alpha-D-glucosamine 1-phosphate + UTP + H(+) = UDP-N-acetyl-alpha-D-glucosamine + diphosphate. It functions in the pathway nucleotide-sugar biosynthesis; UDP-N-acetyl-alpha-D-glucosamine biosynthesis; N-acetyl-alpha-D-glucosamine 1-phosphate from alpha-D-glucosamine 6-phosphate (route II): step 2/2. Its pathway is nucleotide-sugar biosynthesis; UDP-N-acetyl-alpha-D-glucosamine biosynthesis; UDP-N-acetyl-alpha-D-glucosamine from N-acetyl-alpha-D-glucosamine 1-phosphate: step 1/1. It participates in bacterial outer membrane biogenesis; LPS lipid A biosynthesis. Its function is as follows. Catalyzes the last two sequential reactions in the de novo biosynthetic pathway for UDP-N-acetylglucosamine (UDP-GlcNAc). The C-terminal domain catalyzes the transfer of acetyl group from acetyl coenzyme A to glucosamine-1-phosphate (GlcN-1-P) to produce N-acetylglucosamine-1-phosphate (GlcNAc-1-P), which is converted into UDP-GlcNAc by the transfer of uridine 5-monophosphate (from uridine 5-triphosphate), a reaction catalyzed by the N-terminal domain. The polypeptide is Bifunctional protein GlmU (Ralstonia nicotianae (strain ATCC BAA-1114 / GMI1000) (Ralstonia solanacearum)).